A 96-amino-acid chain; its full sequence is Small ribosomal subunit protein bS20 (96 aa).

The segment at 1-27 (MAKQEVAAKKVKRPTALKRDLQNKKKR) is disordered.

This sequence belongs to the bacterial ribosomal protein bS20 family.

Its function is as follows. Binds directly to 16S ribosomal RNA. The sequence is that of Small ribosomal subunit protein bS20 from Protochlamydia amoebophila (strain UWE25).